Reading from the N-terminus, the 183-residue chain is MKEKMSVKTIVAIGIGSAVFVILGRFVVIPTGIPNTNLETSYPFLALMSVVFGPVAGGLIGLIGHTLKDFTTYGSAWWSWIICSGIIGIIFGFAGRKMDLQHGEFTTNDMVRFNIFQAFGNIVVWGLIAPSLDILIYSEPASKVFTQGVFATVSNIVAVGIIGTLLMKAYASTRTKKGSLSKD.

The next 5 membrane-spanning stretches (helical) occupy residues 10–30 (IVAI…VVIP), 44–64 (FLAL…GLIG), 74–94 (GSAW…FGFA), 115–135 (IFQA…LDIL), and 147–167 (QGVF…TLLM).

The protein belongs to the UPF0397 family.

The protein localises to the cell membrane. The sequence is that of UPF0397 protein EF_2154 from Enterococcus faecalis (strain ATCC 700802 / V583).